The sequence spans 817 residues: Leucine--tRNA ligase (817 aa).

Residues 42–52 carry the 'HIGH' region motif; it reads PYPSGRLHMGH. The 'KMSKS' region motif lies at 576 to 580; the sequence is KMSKS. An ATP-binding site is contributed by lysine 579.

The protein belongs to the class-I aminoacyl-tRNA synthetase family.

The protein localises to the cytoplasm. The enzyme catalyses tRNA(Leu) + L-leucine + ATP = L-leucyl-tRNA(Leu) + AMP + diphosphate. The chain is Leucine--tRNA ligase from Halorhodospira halophila (strain DSM 244 / SL1) (Ectothiorhodospira halophila (strain DSM 244 / SL1)).